Here is an 883-residue protein sequence, read N- to C-terminus: Alanine--tRNA ligase (883 aa).

Positions 562, 566, 664, and 668 each coordinate Zn(2+).

It belongs to the class-II aminoacyl-tRNA synthetase family. As to quaternary structure, homotetramer. The cofactor is Zn(2+).

The protein resides in the cytoplasm. The enzyme catalyses tRNA(Ala) + L-alanine + ATP = L-alanyl-tRNA(Ala) + AMP + diphosphate. Functionally, catalyzes the attachment of alanine to tRNA(Ala) in a two-step reaction: alanine is first activated by ATP to form Ala-AMP and then transferred to the acceptor end of tRNA(Ala). Also edits incorrectly charged Ser-tRNA(Ala) and Gly-tRNA(Ala) via its editing domain. This is Alanine--tRNA ligase from Buchnera aphidicola subsp. Schizaphis graminum (strain Sg).